A 264-amino-acid polypeptide reads, in one-letter code: 3-methyl-2-oxobutanoate hydroxymethyltransferase (264 aa).

Mg(2+) contacts are provided by Asp45 and Asp84. Residues 45-46 (DS), Asp84, and Lys112 contribute to the 3-methyl-2-oxobutanoate site. Residue Glu114 coordinates Mg(2+). Glu181 (proton acceptor) is an active-site residue.

Belongs to the PanB family. Homodecamer; pentamer of dimers. It depends on Mg(2+) as a cofactor.

The protein localises to the cytoplasm. It catalyses the reaction 3-methyl-2-oxobutanoate + (6R)-5,10-methylene-5,6,7,8-tetrahydrofolate + H2O = 2-dehydropantoate + (6S)-5,6,7,8-tetrahydrofolate. The protein operates within cofactor biosynthesis; (R)-pantothenate biosynthesis; (R)-pantoate from 3-methyl-2-oxobutanoate: step 1/2. Catalyzes the reversible reaction in which hydroxymethyl group from 5,10-methylenetetrahydrofolate is transferred onto alpha-ketoisovalerate to form ketopantoate. The polypeptide is 3-methyl-2-oxobutanoate hydroxymethyltransferase (Escherichia coli O157:H7).